The sequence spans 440 residues: Xylose isomerase (440 aa).

Active-site residues include His100 and Asp103. Mg(2+) is bound by residues Glu231, Glu267, His270, Asp295, Asp306, Asp308, and Asp338.

This sequence belongs to the xylose isomerase family. In terms of assembly, homotetramer. It depends on Mg(2+) as a cofactor.

Its subcellular location is the cytoplasm. It catalyses the reaction alpha-D-xylose = alpha-D-xylulofuranose. In Burkholderia cenocepacia (strain ATCC BAA-245 / DSM 16553 / LMG 16656 / NCTC 13227 / J2315 / CF5610) (Burkholderia cepacia (strain J2315)), this protein is Xylose isomerase.